Consider the following 124-residue polypeptide: Small ribosomal subunit protein uS12 (124 aa).

Asp89 carries the 3-methylthioaspartic acid modification. Lys108 carries the post-translational modification N6-acetyllysine.

It belongs to the universal ribosomal protein uS12 family. As to quaternary structure, part of the 30S ribosomal subunit. Contacts proteins S8 and S17. May interact with IF1 in the 30S initiation complex.

With S4 and S5 plays an important role in translational accuracy. Functionally, interacts with and stabilizes bases of the 16S rRNA that are involved in tRNA selection in the A site and with the mRNA backbone. Located at the interface of the 30S and 50S subunits, it traverses the body of the 30S subunit contacting proteins on the other side and probably holding the rRNA structure together. The combined cluster of proteins S8, S12 and S17 appears to hold together the shoulder and platform of the 30S subunit. This Escherichia coli (strain K12 / MC4100 / BW2952) protein is Small ribosomal subunit protein uS12.